Reading from the N-terminus, the 855-residue chain is Protein translocase subunit SecA (855 aa).

ATP is bound by residues Gln-85, 103-107 (GEGKT), and Asp-492. Residues 794–845 (AAIHEESSSAAAPGPGQNQPGGPGGPSAGPVAPVRNLDKHGRNELCPCGSGK) are disordered. Positions 801–811 (SSAAAPGPGQN) are enriched in low complexity. Cys-839, Cys-841, Cys-850, and Cys-851 together coordinate Zn(2+).

It belongs to the SecA family. In terms of assembly, monomer and homodimer. Part of the essential Sec protein translocation apparatus which comprises SecA, SecYEG and auxiliary proteins SecDF. Other proteins may also be involved. The cofactor is Zn(2+).

It localises to the cell membrane. The protein localises to the cytoplasm. It carries out the reaction ATP + H2O + cellular proteinSide 1 = ADP + phosphate + cellular proteinSide 2.. Part of the Sec protein translocase complex. Interacts with the SecYEG preprotein conducting channel. Has a central role in coupling the hydrolysis of ATP to the transfer of proteins into and across the cell membrane, serving as an ATP-driven molecular motor driving the stepwise translocation of polypeptide chains across the membrane. The sequence is that of Protein translocase subunit SecA from Clostridium beijerinckii (strain ATCC 51743 / NCIMB 8052) (Clostridium acetobutylicum).